The sequence spans 177 residues: Large ribosomal subunit protein uL6 (177 aa).

The span at P154–R171 shows a compositional bias: basic and acidic residues. The segment at P154 to K177 is disordered.

This sequence belongs to the universal ribosomal protein uL6 family. As to quaternary structure, part of the 50S ribosomal subunit.

In terms of biological role, this protein binds to the 23S rRNA, and is important in its secondary structure. It is located near the subunit interface in the base of the L7/L12 stalk, and near the tRNA binding site of the peptidyltransferase center. This Marinobacter nauticus (strain ATCC 700491 / DSM 11845 / VT8) (Marinobacter aquaeolei) protein is Large ribosomal subunit protein uL6.